Consider the following 99-residue polypeptide: Nucleoid-associated protein SPy_1862/M5005_Spy1580 (99 aa).

The protein belongs to the YbaB/EbfC family. As to quaternary structure, homodimer.

It is found in the cytoplasm. It localises to the nucleoid. Its function is as follows. Binds to DNA and alters its conformation. May be involved in regulation of gene expression, nucleoid organization and DNA protection. This chain is Nucleoid-associated protein SPy_1862/M5005_Spy1580, found in Streptococcus pyogenes serotype M1.